A 349-amino-acid chain; its full sequence is uncharacterized protein (349 aa).

This is an uncharacterized protein from Archaeoglobus fulgidus (strain ATCC 49558 / DSM 4304 / JCM 9628 / NBRC 100126 / VC-16).